Reading from the N-terminus, the 218-residue chain is 1-Cys peroxiredoxin PER1 (218 aa).

Positions 4 to 164 (LTIGDTVPNL…VVRAVDSLLT (161 aa)) constitute a Thioredoxin domain. The Cysteine sulfenic acid (-SOH) intermediate role is filled by Cys46. Residues 194–217 (KKMFPQGFETADLPSKKGYLRFTK) carry the Bipartite nuclear localization signal motif.

It belongs to the peroxiredoxin family. Prx6 subfamily. As to expression, embryo and aleurone cells.

It localises to the nucleus. The protein resides in the cytoplasm. The catalysed reaction is a hydroperoxide + [thioredoxin]-dithiol = an alcohol + [thioredoxin]-disulfide + H2O. Thiol-specific peroxidase that catalyzes the reduction of hydrogen peroxide and organic hydroperoxides to water and alcohols, respectively. Seems to contribute to the inhibition of germination during stress. The protein is 1-Cys peroxiredoxin PER1 (PER1) of Hordeum vulgare (Barley).